Reading from the N-terminus, the 1335-residue chain is Protein SPATA31F1 (1335 aa).

Residues 8–28 (LWEVGYPLYIYGSIFIVIVII) form a helical membrane-spanning segment. Disordered regions lie at residues 403–424 (ALKA…SGSD), 480–502 (LPKT…MSPS), 972–1002 (VQQN…SGDM), 1019–1141 (PSLE…LQDS), and 1248–1335 (ENVA…GHPT). Polar residues predominate over residues 414–424 (SGGQDNDSGSD). The segment covering 972 to 1000 (VQQNQKQSNSKAVPQGSAHSVSKISQPSG) has biased composition (polar residues). 3 stretches are compositionally biased toward basic and acidic residues: residues 1047–1064 (NRED…REGD), 1071–1083 (STRE…EDQR), and 1129–1139 (PGEKESEKDLQ).

It belongs to the SPATA31 family.

The protein resides in the membrane. In Homo sapiens (Human), this protein is Protein SPATA31F1.